Here is a 242-residue protein sequence, read N- to C-terminus: 4-hydroxy-tetrahydrodipicolinate reductase (242 aa).

Residues 8 to 13, 75 to 77, and 99 to 102 each bind NAD(+); these read GAKGRM, GTT, and ATNM. H131 functions as the Proton donor/acceptor in the catalytic mechanism. Position 132 (H132) interacts with (S)-2,3,4,5-tetrahydrodipicolinate. The Proton donor role is filled by K135. (S)-2,3,4,5-tetrahydrodipicolinate is bound at residue 141–142; the sequence is GT.

It belongs to the DapB family.

The protein resides in the cytoplasm. The enzyme catalyses (S)-2,3,4,5-tetrahydrodipicolinate + NAD(+) + H2O = (2S,4S)-4-hydroxy-2,3,4,5-tetrahydrodipicolinate + NADH + H(+). It catalyses the reaction (S)-2,3,4,5-tetrahydrodipicolinate + NADP(+) + H2O = (2S,4S)-4-hydroxy-2,3,4,5-tetrahydrodipicolinate + NADPH + H(+). Its pathway is amino-acid biosynthesis; L-lysine biosynthesis via DAP pathway; (S)-tetrahydrodipicolinate from L-aspartate: step 4/4. Functionally, catalyzes the conversion of 4-hydroxy-tetrahydrodipicolinate (HTPA) to tetrahydrodipicolinate. The sequence is that of 4-hydroxy-tetrahydrodipicolinate reductase from Campylobacter jejuni subsp. jejuni serotype O:6 (strain 81116 / NCTC 11828).